The following is a 324-amino-acid chain: Aspartate carbamoyltransferase catalytic subunit (324 aa).

Arg55 and Thr56 together coordinate carbamoyl phosphate. An L-aspartate-binding site is contributed by Lys83. Carbamoyl phosphate is bound by residues Arg105, His135, and Gln138. L-aspartate is bound by residues Arg173 and Arg227. Positions 268 and 269 each coordinate carbamoyl phosphate.

Belongs to the aspartate/ornithine carbamoyltransferase superfamily. ATCase family. Heterododecamer (2C3:3R2) of six catalytic PyrB chains organized as two trimers (C3), and six regulatory PyrI chains organized as three dimers (R2).

It catalyses the reaction carbamoyl phosphate + L-aspartate = N-carbamoyl-L-aspartate + phosphate + H(+). Its pathway is pyrimidine metabolism; UMP biosynthesis via de novo pathway; (S)-dihydroorotate from bicarbonate: step 2/3. Its function is as follows. Catalyzes the condensation of carbamoyl phosphate and aspartate to form carbamoyl aspartate and inorganic phosphate, the committed step in the de novo pyrimidine nucleotide biosynthesis pathway. The chain is Aspartate carbamoyltransferase catalytic subunit from Nocardioides sp. (strain ATCC BAA-499 / JS614).